Reading from the N-terminus, the 1027-residue chain is Xyloglucanase (1027 aa).

The N-terminal stretch at 1–32 (MKTFLGKKLWMASLAVALAAGSFAALPEMTSA) is a signal peptide. The active-site Nucleophile is Asp70. 4 BNR repeats span residues 134–143 (RSTDRGDTWQ), 185–196 (WRSSDYGATWSK), 252–262 (YRSTDGGATWT), and 357–367 (FRSKDGGTTWT). Catalysis depends on Asp479, which acts as the Proton donor. 2 BNR repeats span residues 537–545 (SSDGGTNWY) and 717–727 (FRSDDGGASWV). The CBM3 domain occupies 876-1027 (PEGSIRIEMY…SGTLQWGIEP (152 aa)).

Belongs to the glycosyl hydrolase 74 family.

Hydrolyzes the glucosidic bonds of unbranched Glc residues in tamarind seed xyloglucan, producing XXXG, XLXG, XXLG and XLLG. May have a dual endo- and exo- mode of action towards xyloglucan, or may have an endo-processive mode of action. In Paenibacillus sp, this protein is Xyloglucanase.